The following is a 104-amino-acid chain: Large ribosomal subunit protein bL21c (104 aa).

It belongs to the bacterial ribosomal protein bL21 family. As to quaternary structure, part of the 50S ribosomal subunit.

It is found in the plastid. The protein resides in the cyanelle. In terms of biological role, this protein binds to 23S rRNA. This chain is Large ribosomal subunit protein bL21c, found in Cyanophora paradoxa.